A 465-amino-acid polypeptide reads, in one-letter code: Chromosomal replication initiator protein DnaA (465 aa).

A domain I, interacts with DnaA modulators region spans residues 1–87 (MLWTDCLTRL…RPGSILSSSE (87 aa)). Positions 81 to 123 (SILSSSEQPATTTAALQTAPIPQPAKGKREPEPVANTAVSSKS) are disordered. Positions 88–100 (QPATTTAALQTAP) are enriched in low complexity. The segment at 88–127 (QPATTTAALQTAPIPQPAKGKREPEPVANTAVSSKSSKKK) is domain II. The tract at residues 128 to 345 (LLNPQFTFSL…GALNKVVAIS (218 aa)) is domain III, AAA+ region. 4 residues coordinate ATP: Gly-173, Gly-175, Lys-176, and Thr-177. The segment at 346–465 (RFKGAPIDLD…YKNLLRLLQS (120 aa)) is domain IV, binds dsDNA.

The protein belongs to the DnaA family. As to quaternary structure, oligomerizes as a right-handed, spiral filament on DNA at oriC.

It is found in the cytoplasm. Functionally, plays an essential role in the initiation and regulation of chromosomal replication. ATP-DnaA binds to the origin of replication (oriC) to initiate formation of the DNA replication initiation complex once per cell cycle. Binds the DnaA box (a 9 base pair repeat at the origin) and separates the double-stranded (ds)DNA. Forms a right-handed helical filament on oriC DNA; dsDNA binds to the exterior of the filament while single-stranded (ss)DNA is stabiized in the filament's interior. The ATP-DnaA-oriC complex binds and stabilizes one strand of the AT-rich DNA unwinding element (DUE), permitting loading of DNA polymerase. After initiation quickly degrades to an ADP-DnaA complex that is not apt for DNA replication. Binds acidic phospholipids. This Acinetobacter baumannii (strain SDF) protein is Chromosomal replication initiator protein DnaA.